We begin with the raw amino-acid sequence, 38 residues long: Glutathione S-transferase 2 (38 aa).

Belongs to the GST superfamily. Phi family.

The catalysed reaction is RX + glutathione = an S-substituted glutathione + a halide anion + H(+). In terms of biological role, conjugation of reduced glutathione to a wide number of exogenous and endogenous hydrophobic electrophiles. In plants, may have a detoxification role against certain herbicides. In Populus euphratica (Euphrates poplar), this protein is Glutathione S-transferase 2.